Reading from the N-terminus, the 498-residue chain is ATP synthase subunit beta, chloroplastic (498 aa).

172-179 contributes to the ATP binding site; the sequence is GGAGVGKT.

It belongs to the ATPase alpha/beta chains family. F-type ATPases have 2 components, CF(1) - the catalytic core - and CF(0) - the membrane proton channel. CF(1) has five subunits: alpha(3), beta(3), gamma(1), delta(1), epsilon(1). CF(0) has four main subunits: a(1), b(1), b'(1) and c(9-12).

Its subcellular location is the plastid. It localises to the chloroplast thylakoid membrane. The catalysed reaction is ATP + H2O + 4 H(+)(in) = ADP + phosphate + 5 H(+)(out). Its function is as follows. Produces ATP from ADP in the presence of a proton gradient across the membrane. The catalytic sites are hosted primarily by the beta subunits. The chain is ATP synthase subunit beta, chloroplastic from Beta vulgaris (Sugar beet).